The sequence spans 418 residues: Inhibitor of growth protein 3 (418 aa).

The interval 127-165 (DTPSQPVNNHHAHSHTPVEKRKYNPTSHHTTTDHIPEKK) is disordered. Residues lysine 148, lysine 165, and lysine 167 each participate in a glycyl lysine isopeptide (Lys-Gly) (interchain with G-Cter in SUMO2) cross-link. Positions 156-165 (TTTDHIPEKK) are enriched in basic and acidic residues. N6-acetyllysine is present on lysine 181. A Glycyl lysine isopeptide (Lys-Gly) (interchain with G-Cter in SUMO2) cross-link involves residue lysine 256. Lysine 264 carries the post-translational modification N6-acetyllysine. The segment at 286 to 325 (TQNASSSAADSRSGRKSKNNNKSSSQQSSSSSSSSSLSSC) is disordered. A compositionally biased stretch (low complexity) spans 305–325 (NNKSSSQQSSSSSSSSSLSSC). The PHD-type zinc finger occupies 360 to 409 (PRYCICNQVSYGEMVGCDNQDCPIEWFHYGCVGLTEAPKGKWYCPQCTAA). Positions 363, 365, 376, 381, 387, 390, 403, and 406 each coordinate Zn(2+).

It belongs to the ING family. In terms of assembly, interacts with H3K4me3 and to a lesser extent with H3K4me2. Component of the NuA4 histone acetyltransferase complex which contains the catalytic subunit KAT5/TIP60 and the subunits EP400, TRRAP/PAF400, BRD8/SMAP, EPC1, DMAP1/DNMAP1, RUVBL1/TIP49, RUVBL2, ING3, actin, ACTL6A/BAF53A, MORF4L1/MRG15, MORF4L2/MRGX, MRGBP, YEATS4/GAS41, VPS72/YL1 and MEAF6. The NuA4 complex interacts with MYC and the adenovirus E1A protein. HTATTIP/TIP60, EPC1, and ING3 together constitute a minimal HAT complex termed Piccolo NuA4. Component of a SWR1-like complex. As to expression, expressed in brain, heart, kidney, liver, lung, ovaries, placenta, prostate, skeletal muscle, small intestine, spleen, testis and thymus.

The protein localises to the nucleus. In terms of biological role, component of the NuA4 histone acetyltransferase (HAT) complex which is involved in transcriptional activation of select genes principally by acetylation of nucleosomal histones H4 and H2A. This modification may both alter nucleosome - DNA interactions and promote interaction of the modified histones with other proteins which positively regulate transcription. This complex may be required for the activation of transcriptional programs associated with oncogene and proto-oncogene mediated growth induction, tumor suppressor mediated growth arrest and replicative senescence, apoptosis, and DNA repair. NuA4 may also play a direct role in DNA repair when directly recruited to sites of DNA damage. Component of a SWR1-like complex that specifically mediates the removal of histone H2A.Z/H2AZ1 from the nucleosome. The polypeptide is Inhibitor of growth protein 3 (ING3) (Homo sapiens (Human)).